A 507-amino-acid chain; its full sequence is Arabinose import ATP-binding protein AraG (507 aa).

ABC transporter domains are found at residues L8 to R243 and P255 to I499. G40–S47 provides a ligand contact to ATP.

This sequence belongs to the ABC transporter superfamily. Arabinose importer (TC 3.A.1.2.2) family. In terms of assembly, the complex is composed of two ATP-binding proteins (AraG), two transmembrane proteins (AraH) and a solute-binding protein (AraF).

The protein localises to the cell inner membrane. The enzyme catalyses L-arabinose(out) + ATP + H2O = L-arabinose(in) + ADP + phosphate + H(+). Functionally, part of the ABC transporter complex AraFGH involved in arabinose import. Responsible for energy coupling to the transport system. This chain is Arabinose import ATP-binding protein AraG, found in Pectobacterium atrosepticum (strain SCRI 1043 / ATCC BAA-672) (Erwinia carotovora subsp. atroseptica).